We begin with the raw amino-acid sequence, 877 residues long: Leucine--tRNA ligase (877 aa).

Positions 48-58 (PYPSGKLHMGH) match the 'HIGH' region motif. Positions 636 to 640 (KMSKS) match the 'KMSKS' region motif. Lys-639 is an ATP binding site.

The protein belongs to the class-I aminoacyl-tRNA synthetase family.

The protein resides in the cytoplasm. It carries out the reaction tRNA(Leu) + L-leucine + ATP = L-leucyl-tRNA(Leu) + AMP + diphosphate. In Ralstonia pickettii (strain 12J), this protein is Leucine--tRNA ligase.